The following is a 69-amino-acid chain: DNA-directed RNA polymerase subunit omega (69 aa).

This sequence belongs to the RNA polymerase subunit omega family. As to quaternary structure, the RNAP catalytic core consists of 2 alpha, 1 beta, 1 beta' and 1 omega subunit. When a sigma factor is associated with the core the holoenzyme is formed, which can initiate transcription.

The enzyme catalyses RNA(n) + a ribonucleoside 5'-triphosphate = RNA(n+1) + diphosphate. Its function is as follows. Promotes RNA polymerase assembly. Latches the N- and C-terminal regions of the beta' subunit thereby facilitating its interaction with the beta and alpha subunits. The sequence is that of DNA-directed RNA polymerase subunit omega from Geotalea uraniireducens (strain Rf4) (Geobacter uraniireducens).